The primary structure comprises 376 residues: Chaperone protein DnaJ (376 aa).

Residues 5 to 70 enclose the J domain; sequence DYYEVLGVAR…NKRRAYDAHG (66 aa). A CR-type zinc finger spans residues 132–209; it reads GIERRIEIPT…CHGAGRVEED (78 aa). Cysteine 145, cysteine 148, cysteine 161, cysteine 164, cysteine 183, cysteine 186, cysteine 197, and cysteine 200 together coordinate Zn(2+). CXXCXGXG motif repeat units lie at residues 145 to 152, 161 to 168, 183 to 190, and 197 to 204; these read CEPCHGSG, CATCHGRG, CPHCDGRG, and CKTCHGAG.

The protein belongs to the DnaJ family. Homodimer. Zn(2+) serves as cofactor.

It is found in the cytoplasm. In terms of biological role, participates actively in the response to hyperosmotic and heat shock by preventing the aggregation of stress-denatured proteins and by disaggregating proteins, also in an autonomous, DnaK-independent fashion. Unfolded proteins bind initially to DnaJ; upon interaction with the DnaJ-bound protein, DnaK hydrolyzes its bound ATP, resulting in the formation of a stable complex. GrpE releases ADP from DnaK; ATP binding to DnaK triggers the release of the substrate protein, thus completing the reaction cycle. Several rounds of ATP-dependent interactions between DnaJ, DnaK and GrpE are required for fully efficient folding. Also involved, together with DnaK and GrpE, in the DNA replication of plasmids through activation of initiation proteins. The sequence is that of Chaperone protein DnaJ from Xanthomonas campestris pv. campestris (strain 8004).